Consider the following 140-residue polypeptide: Nucleoside diphosphate kinase (140 aa).

ATP-binding residues include Lys-11, Phe-59, Arg-87, Thr-93, Arg-104, and Asn-114. His-117 (pros-phosphohistidine intermediate) is an active-site residue.

This sequence belongs to the NDK family. In terms of assembly, homotetramer. Mg(2+) serves as cofactor.

The protein resides in the cytoplasm. The catalysed reaction is a 2'-deoxyribonucleoside 5'-diphosphate + ATP = a 2'-deoxyribonucleoside 5'-triphosphate + ADP. The enzyme catalyses a ribonucleoside 5'-diphosphate + ATP = a ribonucleoside 5'-triphosphate + ADP. In terms of biological role, major role in the synthesis of nucleoside triphosphates other than ATP. The ATP gamma phosphate is transferred to the NDP beta phosphate via a ping-pong mechanism, using a phosphorylated active-site intermediate. In Francisella tularensis subsp. mediasiatica (strain FSC147), this protein is Nucleoside diphosphate kinase.